A 311-amino-acid polypeptide reads, in one-letter code: tRNA dimethylallyltransferase (311 aa).

ATP is bound at residue 12 to 19 (GPTASGKT). 14–19 (TASGKT) lines the substrate pocket. 3 interaction with substrate tRNA regions span residues 37 to 40 (DSAL), 161 to 165 (QRINR), and 241 to 246 (RCVGYR).

Belongs to the IPP transferase family. As to quaternary structure, monomer. The cofactor is Mg(2+).

It catalyses the reaction adenosine(37) in tRNA + dimethylallyl diphosphate = N(6)-dimethylallyladenosine(37) in tRNA + diphosphate. Functionally, catalyzes the transfer of a dimethylallyl group onto the adenine at position 37 in tRNAs that read codons beginning with uridine, leading to the formation of N6-(dimethylallyl)adenosine (i(6)A). In Histophilus somni (strain 2336) (Haemophilus somnus), this protein is tRNA dimethylallyltransferase.